Here is a 633-residue protein sequence, read N- to C-terminus: Micronuclear linker histone polyprotein (633 aa).

DNA-binding regions (HMG box) lie at residues Pro-12 to Tyr-74 and Pro-96 to Asn-164. The tract at residues Ala-170–Gln-633 is disordered. Residues Lys-174–Ser-190 are compositionally biased toward basic residues. Low complexity-rich tracts occupy residues Ser-212–Ser-224 and Asn-253–Ser-271. Basic residues-rich tracts occupy residues Lys-272 to Ser-309 and Ser-330 to Ser-352. Basic and acidic residues-rich tracts occupy residues Lys-353–Lys-374 and Ala-382–Thr-401. Positions Asn-406–Gly-416 are enriched in low complexity. The segment covering Ser-417–Ser-444 has biased composition (basic residues). A compositionally biased stretch (polar residues) spans Pro-446 to Ser-469. The segment covering Arg-478–Asn-491 has biased composition (basic and acidic residues). The segment covering Ser-496 to Lys-524 has biased composition (basic residues). 2 stretches are compositionally biased toward basic and acidic residues: residues Ser-540 to Ala-550 and Glu-559 to Lys-612.

All four histones are processed from the precursor molecule. In terms of processing, phosphorylated in growing and dividing cells but not in nongrowing (starved) cells. Post-translationally, the N-terminus of MIC LH-alpha and MIC LH-delta is blocked.

The protein resides in the nucleus. It is found in the chromosome. This is Micronuclear linker histone polyprotein (MLH) from Tetrahymena thermophila (strain SB210).